A 498-amino-acid polypeptide reads, in one-letter code: Glutamyl-tRNA(Gln) amidotransferase subunit A (498 aa).

Active-site charge relay system residues include Lys-79 and Ser-154. The active-site Acyl-ester intermediate is Ser-178.

It belongs to the amidase family. GatA subfamily. Heterotrimer of A, B and C subunits.

The enzyme catalyses L-glutamyl-tRNA(Gln) + L-glutamine + ATP + H2O = L-glutaminyl-tRNA(Gln) + L-glutamate + ADP + phosphate + H(+). Functionally, allows the formation of correctly charged Gln-tRNA(Gln) through the transamidation of misacylated Glu-tRNA(Gln) in organisms which lack glutaminyl-tRNA synthetase. The reaction takes place in the presence of glutamine and ATP through an activated gamma-phospho-Glu-tRNA(Gln). In Psychrobacter cryohalolentis (strain ATCC BAA-1226 / DSM 17306 / VKM B-2378 / K5), this protein is Glutamyl-tRNA(Gln) amidotransferase subunit A.